Reading from the N-terminus, the 473-residue chain is Photosystem II CP43 reaction center protein (473 aa).

The propeptide occupies 1-14; sequence MKTLYSRRRFYHVE. At Thr15 the chain carries N-acetylthreonine. The residue at position 15 (Thr15) is a Phosphothreonine. 5 consecutive transmembrane segments (helical) span residues 69-93, 134-155, 178-200, 255-275, and 291-312; these read LFEV…PHLA, LLGP…KDRN, KALY…RKIT, KPFA…LSYS, and WFNN…ASQA. Glu367 contacts [CaMn4O5] cluster. Residues 447 to 471 traverse the membrane as a helical segment; it reads RARAAAAGFEKGIDRDFEPVLSMTP.

It belongs to the PsbB/PsbC family. PsbC subfamily. PSII is composed of 1 copy each of membrane proteins PsbA, PsbB, PsbC, PsbD, PsbE, PsbF, PsbH, PsbI, PsbJ, PsbK, PsbL, PsbM, PsbT, PsbX, PsbY, PsbZ, Psb30/Ycf12, at least 3 peripheral proteins of the oxygen-evolving complex and a large number of cofactors. It forms dimeric complexes. Binds multiple chlorophylls and provides some of the ligands for the Ca-4Mn-5O cluster of the oxygen-evolving complex. It may also provide a ligand for a Cl- that is required for oxygen evolution. PSII binds additional chlorophylls, carotenoids and specific lipids. serves as cofactor.

It localises to the plastid. The protein localises to the chloroplast thylakoid membrane. Functionally, one of the components of the core complex of photosystem II (PSII). It binds chlorophyll and helps catalyze the primary light-induced photochemical processes of PSII. PSII is a light-driven water:plastoquinone oxidoreductase, using light energy to abstract electrons from H(2)O, generating O(2) and a proton gradient subsequently used for ATP formation. This Solanum bulbocastanum (Wild potato) protein is Photosystem II CP43 reaction center protein.